Consider the following 276-residue polypeptide: Adenylate kinase (276 aa).

52–57 (GAGKGT) contacts ATP. Residues 72–101 (ATGDMLRAQVAAKTPLGREAKKIMDAGGLV) are NMP. AMP contacts are provided by residues Thr73, Arg78, 99-101 (GLV), 128-131 (GFPR), and Gln135. Residues 169–206 (GRLVHPASGRSYHKIFNPPKAPMTDDVTGEPLIQRSDD) form an LID region. ATP-binding positions include Arg170 and 179-180 (SY). Positions 203 and 214 each coordinate AMP. Gln242 lines the ATP pocket.

It belongs to the adenylate kinase family. AK2 subfamily. As to quaternary structure, monomer.

The protein localises to the cytoplasm. It is found in the cytosol. It localises to the mitochondrion intermembrane space. It catalyses the reaction AMP + ATP = 2 ADP. Catalyzes the reversible transfer of the terminal phosphate group between ATP and AMP. Plays an important role in cellular energy homeostasis and in adenine nucleotide metabolism. Adenylate kinase activity is critical for regulation of the phosphate utilization and the AMP de novo biosynthesis pathways. The sequence is that of Adenylate kinase (adk1) from Pyrenophora tritici-repentis (strain Pt-1C-BFP) (Wheat tan spot fungus).